A 277-amino-acid chain; its full sequence is Undecaprenyl-diphosphatase (277 aa).

The next 8 helical transmembrane spans lie at 11–31 (WWQA…PISS), 47–67 (AGAS…LIYF), 96–116 (VGIL…KAIW), 123–143 (LWVI…AEQT), 153–173 (LGIW…IPGV), 197–217 (SFLL…ISEF), 227–247 (LGTL…IQFL), and 254–274 (LFIV…ALGF).

This sequence belongs to the UppP family.

The protein localises to the cell inner membrane. The catalysed reaction is di-trans,octa-cis-undecaprenyl diphosphate + H2O = di-trans,octa-cis-undecaprenyl phosphate + phosphate + H(+). In terms of biological role, catalyzes the dephosphorylation of undecaprenyl diphosphate (UPP). Confers resistance to bacitracin. This Synechococcus sp. (strain JA-2-3B'a(2-13)) (Cyanobacteria bacterium Yellowstone B-Prime) protein is Undecaprenyl-diphosphatase.